Here is a 1374-residue protein sequence, read N- to C-terminus: DNA-directed RNA polymerase subunit beta' (1374 aa).

Positions 1–47 are disordered; that stretch reads MTSTSPKSRKPSTKTTKSKSKSKSKSKAAKAAAAGASPALARTPPQF. Positions 7–28 are enriched in basic residues; that stretch reads KSRKPSTKTTKSKSKSKSKSKA. A compositionally biased stretch (low complexity) spans 29–39; sequence AKAAAAGASPA. Residues Cys258, Cys325, Cys332, and Cys335 each contribute to the Zn(2+) site. Positions 1344-1374 are disordered; it reads RPTGENELEEEQLPDPSALEGLQQEGLLTEE. The segment covering 1362-1374 has biased composition (low complexity); it reads LEGLQQEGLLTEE.

This sequence belongs to the RNA polymerase beta' chain family. RpoC2 subfamily. In terms of assembly, in cyanobacteria the RNAP catalytic core is composed of 2 alpha, 1 beta, 1 beta', 1 gamma and 1 omega subunit. When a sigma factor is associated with the core the holoenzyme is formed, which can initiate transcription. The cofactor is Zn(2+).

It catalyses the reaction RNA(n) + a ribonucleoside 5'-triphosphate = RNA(n+1) + diphosphate. Functionally, DNA-dependent RNA polymerase catalyzes the transcription of DNA into RNA using the four ribonucleoside triphosphates as substrates. This Prochlorococcus marinus (strain MIT 9313) protein is DNA-directed RNA polymerase subunit beta'.